Reading from the N-terminus, the 432-residue chain is Ribulose bisphosphate carboxylase-like protein 2 (432 aa).

Mg(2+)-binding residues include Lys198, Asp200, and Glu201. At Lys198 the chain carries N6-carboxylysine.

It belongs to the RuBisCO large chain family. Type IV subfamily. As to quaternary structure, homodimer. It depends on Mg(2+) as a cofactor.

In terms of biological role, may be involved in sulfur metabolism and oxidative stress response. Does not show RuBisCO activity. This chain is Ribulose bisphosphate carboxylase-like protein 2 (rlp2), found in Rhodopseudomonas palustris (strain ATCC BAA-98 / CGA009).